The chain runs to 92 residues: PqqA binding protein (92 aa).

Belongs to the PqqD family. Monomer. Interacts with PqqE.

It participates in cofactor biosynthesis; pyrroloquinoline quinone biosynthesis. In terms of biological role, functions as a PqqA binding protein and presents PqqA to PqqE, in the pyrroloquinoline quinone (PQQ) biosynthetic pathway. This is PqqA binding protein from Pseudomonas paraeruginosa (strain DSM 24068 / PA7) (Pseudomonas aeruginosa (strain PA7)).